The sequence spans 328 residues: Thiamine-monophosphate kinase (328 aa).

Mg(2+) is bound by residues Asp-30, Thr-45, Thr-46, and Asp-47. His-54 serves as a coordination point for substrate. Mg(2+)-binding residues include Asp-75 and Asp-122. ATP contacts are provided by residues 121–122 and Arg-146; that span reads GD. Asp-211 contributes to the Mg(2+) binding site. Ser-213 provides a ligand contact to ATP. Position 214 (Asp-214) interacts with Mg(2+). Substrate-binding residues include Glu-262 and Phe-321.

Belongs to the thiamine-monophosphate kinase family.

It catalyses the reaction thiamine phosphate + ATP = thiamine diphosphate + ADP. Its pathway is cofactor biosynthesis; thiamine diphosphate biosynthesis; thiamine diphosphate from thiamine phosphate: step 1/1. Its function is as follows. Catalyzes the ATP-dependent phosphorylation of thiamine-monophosphate (TMP) to form thiamine-pyrophosphate (TPP), the active form of vitamin B1. The polypeptide is Thiamine-monophosphate kinase (Haemophilus influenzae (strain ATCC 51907 / DSM 11121 / KW20 / Rd)).